The primary structure comprises 389 residues: Phosphoglycerate kinase (389 aa).

Substrate contacts are provided by residues 21-23, R36, 59-62, R112, and R145; these read DLN and HLGR. ATP is bound by residues K196, E313, and 342–345; that span reads GGDT.

The protein belongs to the phosphoglycerate kinase family. Monomer.

It localises to the cytoplasm. The enzyme catalyses (2R)-3-phosphoglycerate + ATP = (2R)-3-phospho-glyceroyl phosphate + ADP. Its pathway is carbohydrate degradation; glycolysis; pyruvate from D-glyceraldehyde 3-phosphate: step 2/5. The chain is Phosphoglycerate kinase from Mannheimia succiniciproducens (strain KCTC 0769BP / MBEL55E).